The sequence spans 388 residues: Leucine aminopeptidase 1 (388 aa).

An N-terminal signal peptide occupies residues 1–19 (MKLPALLILGVAASTMVLA). Positions 20–88 (AIAPDQVPLN…LPKVFPTPAV (69 aa)) are excised as a propeptide. Residues asparagine 96, asparagine 119, asparagine 149, asparagine 164, and asparagine 181 are each glycosylated (N-linked (GlcNAc...) asparagine). The Zn(2+) site is built by histidine 189 and aspartate 207. Residue asparagine 232 is glycosylated (N-linked (GlcNAc...) asparagine). Glutamate 246 and aspartate 273 together coordinate Zn(2+). Cysteine 322 and cysteine 326 are disulfide-bonded. A Zn(2+)-binding site is contributed by histidine 355.

The protein belongs to the peptidase M28 family. M28E subfamily. Monomer. Requires Zn(2+) as cofactor.

Its subcellular location is the secreted. In terms of biological role, extracellular aminopeptidase that allows assimilation of proteinaceous substrates. The protein is Leucine aminopeptidase 1 (LAP1) of Paracoccidioides brasiliensis (strain Pb03).